Reading from the N-terminus, the 382-residue chain is Carbamoyl phosphate synthase small chain (382 aa).

The CPSase stretch occupies residues M1–E189. Residues S47, G241, and G243 each contribute to the L-glutamine site. A Glutamine amidotransferase type-1 domain is found at H193–T380. C269 acts as the Nucleophile in catalysis. Positions 270, 273, 311, 313, and 314 each coordinate L-glutamine. Residues H353 and E355 contribute to the active site.

Belongs to the CarA family. In terms of assembly, composed of two chains; the small (or glutamine) chain promotes the hydrolysis of glutamine to ammonia, which is used by the large (or ammonia) chain to synthesize carbamoyl phosphate. Tetramer of heterodimers (alpha,beta)4.

It catalyses the reaction hydrogencarbonate + L-glutamine + 2 ATP + H2O = carbamoyl phosphate + L-glutamate + 2 ADP + phosphate + 2 H(+). The catalysed reaction is L-glutamine + H2O = L-glutamate + NH4(+). It functions in the pathway amino-acid biosynthesis; L-arginine biosynthesis; carbamoyl phosphate from bicarbonate: step 1/1. It participates in pyrimidine metabolism; UMP biosynthesis via de novo pathway; (S)-dihydroorotate from bicarbonate: step 1/3. In terms of biological role, small subunit of the glutamine-dependent carbamoyl phosphate synthetase (CPSase). CPSase catalyzes the formation of carbamoyl phosphate from the ammonia moiety of glutamine, carbonate, and phosphate donated by ATP, constituting the first step of 2 biosynthetic pathways, one leading to arginine and/or urea and the other to pyrimidine nucleotides. The small subunit (glutamine amidotransferase) binds and cleaves glutamine to supply the large subunit with the substrate ammonia. The protein is Carbamoyl phosphate synthase small chain of Escherichia coli O157:H7.